Here is a 210-residue protein sequence, read N- to C-terminus: Regulator of G-protein signaling 17 (210 aa).

The segment at 1–21 is disordered; the sequence is MRKRQQSQNEGTSAVSQAPGN. An RGS domain is found at 84 to 200; it reads NFDKMMKTPA…LNSQIYKSLV (117 aa).

Interacts with GNAI1 and GNAQ. Interacts with GNAZ and GNAI2. Forms a complex with mu-opioid receptors and G(alpha)z/i2 subunits, including GNAZ and GNAI2; the formation of this complex results in mu-opioid receptor desensitization. N- and O-glycosylated in synapsomal membranes. Post-translationally, serine phosphorylated in synapsomal membranes. In terms of processing, sumoylated with SUMO1 and SUM02 in synaptosomes. The sumoylated forms act as a scaffold for sequestering mu-opioid receptor-activated G(alpha) subunits.

It is found in the membrane. The protein resides in the synapse. It localises to the synaptosome. The protein localises to the nucleus. Its subcellular location is the cytoplasm. Regulates G protein-coupled receptor signaling cascades, including signaling via muscarinic acetylcholine receptor CHRM2 and dopamine receptor DRD2. Inhibits signal transduction by increasing the GTPase activity of G protein alpha subunits, thereby driving them into their inactive GDP-bound form. Binds selectively to GNAZ and GNAI2 subunits, accelerates their GTPase activity and regulates their signaling activities. Negatively regulates mu-opioid receptor-mediated activation of the G-proteins. The chain is Regulator of G-protein signaling 17 (RGS17) from Gallus gallus (Chicken).